We begin with the raw amino-acid sequence, 233 residues long: ATP-dependent dethiobiotin synthetase BioD (233 aa).

12-17 (EVGKTY) contacts ATP. Residue threonine 16 coordinates Mg(2+). Lysine 37 is a catalytic residue. Residues aspartate 54, 120 to 123 (EGAG), and 186 to 187 (ND) each bind ATP. Positions 54 and 120 each coordinate Mg(2+).

This sequence belongs to the dethiobiotin synthetase family. As to quaternary structure, homodimer. It depends on Mg(2+) as a cofactor.

It is found in the cytoplasm. It carries out the reaction (7R,8S)-7,8-diammoniononanoate + CO2 + ATP = (4R,5S)-dethiobiotin + ADP + phosphate + 3 H(+). The protein operates within cofactor biosynthesis; biotin biosynthesis; biotin from 7,8-diaminononanoate: step 1/2. Its function is as follows. Catalyzes a mechanistically unusual reaction, the ATP-dependent insertion of CO2 between the N7 and N8 nitrogen atoms of 7,8-diaminopelargonic acid (DAPA, also called 7,8-diammoniononanoate) to form a ureido ring. The chain is ATP-dependent dethiobiotin synthetase BioD from Alteromonas mediterranea (strain DSM 17117 / CIP 110805 / LMG 28347 / Deep ecotype).